The sequence spans 145 residues: D-aminoacyl-tRNA deacylase (145 aa).

Positions 137-138 match the Gly-cisPro motif, important for rejection of L-amino acids motif; that stretch reads GP.

The protein belongs to the DTD family. As to quaternary structure, homodimer.

Its subcellular location is the cytoplasm. The catalysed reaction is glycyl-tRNA(Ala) + H2O = tRNA(Ala) + glycine + H(+). It carries out the reaction a D-aminoacyl-tRNA + H2O = a tRNA + a D-alpha-amino acid + H(+). An aminoacyl-tRNA editing enzyme that deacylates mischarged D-aminoacyl-tRNAs. Also deacylates mischarged glycyl-tRNA(Ala), protecting cells against glycine mischarging by AlaRS. Acts via tRNA-based rather than protein-based catalysis; rejects L-amino acids rather than detecting D-amino acids in the active site. By recycling D-aminoacyl-tRNA to D-amino acids and free tRNA molecules, this enzyme counteracts the toxicity associated with the formation of D-aminoacyl-tRNA entities in vivo and helps enforce protein L-homochirality. This Shewanella piezotolerans (strain WP3 / JCM 13877) protein is D-aminoacyl-tRNA deacylase.